We begin with the raw amino-acid sequence, 398 residues long: Serpin-ZX (398 aa).

The segment at 342-366 (GTEAAARTARVVTLRSLPVEPVKVD) is RCL.

It belongs to the serpin family. Expressed in roots, coleoptiles, shoots, leaves, embryo and endosperm.

Inhibits chymotrypsin, cathepsin G and trypsin in vitro. In Hordeum vulgare (Barley), this protein is Serpin-ZX (PAZX).